Reading from the N-terminus, the 294-residue chain is Ribosomal protein L11 methyltransferase (294 aa).

The S-adenosyl-L-methionine site is built by Thr144, Gly165, Asp187, and Asn229.

It belongs to the methyltransferase superfamily. PrmA family.

The protein localises to the cytoplasm. It carries out the reaction L-lysyl-[protein] + 3 S-adenosyl-L-methionine = N(6),N(6),N(6)-trimethyl-L-lysyl-[protein] + 3 S-adenosyl-L-homocysteine + 3 H(+). Its function is as follows. Methylates ribosomal protein L11. The protein is Ribosomal protein L11 methyltransferase of Pseudomonas aeruginosa (strain LESB58).